We begin with the raw amino-acid sequence, 875 residues long: Alanine--tRNA ligase (875 aa).

4 residues coordinate Zn(2+): H564, H568, C666, and H670.

It belongs to the class-II aminoacyl-tRNA synthetase family. As to quaternary structure, homotetramer. Zn(2+) is required as a cofactor.

It localises to the cytoplasm. The catalysed reaction is tRNA(Ala) + L-alanine + ATP = L-alanyl-tRNA(Ala) + AMP + diphosphate. Catalyzes the attachment of alanine to tRNA(Ala) in a two-step reaction: alanine is first activated by ATP to form Ala-AMP and then transferred to the acceptor end of tRNA(Ala). Also edits incorrectly charged Ser-tRNA(Ala) and Gly-tRNA(Ala) via its editing domain. In Yersinia pseudotuberculosis serotype O:1b (strain IP 31758), this protein is Alanine--tRNA ligase.